Reading from the N-terminus, the 344-residue chain is Uroporphyrinogen decarboxylase (344 aa).

Residues 26 to 30 (RQAGR), Phe45, Asp75, Tyr151, Ser206, and His320 contribute to the substrate site.

The protein belongs to the uroporphyrinogen decarboxylase family. As to quaternary structure, homodimer.

The protein localises to the cytoplasm. The enzyme catalyses uroporphyrinogen III + 4 H(+) = coproporphyrinogen III + 4 CO2. Its pathway is porphyrin-containing compound metabolism; protoporphyrin-IX biosynthesis; coproporphyrinogen-III from 5-aminolevulinate: step 4/4. Its function is as follows. Catalyzes the decarboxylation of four acetate groups of uroporphyrinogen-III to yield coproporphyrinogen-III. In Staphylococcus epidermidis (strain ATCC 35984 / DSM 28319 / BCRC 17069 / CCUG 31568 / BM 3577 / RP62A), this protein is Uroporphyrinogen decarboxylase.